Consider the following 201-residue polypeptide: Potassium-transporting ATPase KdpC subunit (201 aa).

Residues 7-27 traverse the membrane as a helical segment; that stretch reads PALVLLVALTAITGLAYPLAV.

Belongs to the KdpC family. The system is composed of three essential subunits: KdpA, KdpB and KdpC.

The protein localises to the cell inner membrane. Its function is as follows. Part of the high-affinity ATP-driven potassium transport (or Kdp) system, which catalyzes the hydrolysis of ATP coupled with the electrogenic transport of potassium into the cytoplasm. This subunit acts as a catalytic chaperone that increases the ATP-binding affinity of the ATP-hydrolyzing subunit KdpB by the formation of a transient KdpB/KdpC/ATP ternary complex. This chain is Potassium-transporting ATPase KdpC subunit, found in Methylorubrum extorquens (strain CM4 / NCIMB 13688) (Methylobacterium extorquens).